The following is a 156-amino-acid chain: MQVTEGQLVALQDARFALVAARFNDLIVDRLIDGAADTLRRHGVPEEHLELIRVPGSFELPLAVQRVADAGRADAVIALGAVIRGGTDHHQYVAAECTKGVAQAMMGSGVPVSYGVLTVETVEQAIERAGTKAGNKGAEAALSALEMVDLMRQLEA.

5-amino-6-(D-ribitylamino)uracil is bound by residues Phe-23, 57-59, and 81-83; these read SFE and AVI. Position 86–87 (86–87) interacts with (2S)-2-hydroxy-3-oxobutyl phosphate; the sequence is GT. The Proton donor role is filled by His-89. Tyr-114 contacts 5-amino-6-(D-ribitylamino)uracil. Arg-128 is a binding site for (2S)-2-hydroxy-3-oxobutyl phosphate.

It belongs to the DMRL synthase family. As to quaternary structure, forms an icosahedral capsid composed of 60 subunits, arranged as a dodecamer of pentamers.

It carries out the reaction (2S)-2-hydroxy-3-oxobutyl phosphate + 5-amino-6-(D-ribitylamino)uracil = 6,7-dimethyl-8-(1-D-ribityl)lumazine + phosphate + 2 H2O + H(+). The protein operates within cofactor biosynthesis; riboflavin biosynthesis; riboflavin from 2-hydroxy-3-oxobutyl phosphate and 5-amino-6-(D-ribitylamino)uracil: step 1/2. In terms of biological role, catalyzes the formation of 6,7-dimethyl-8-ribityllumazine by condensation of 5-amino-6-(D-ribitylamino)uracil with 3,4-dihydroxy-2-butanone 4-phosphate. This is the penultimate step in the biosynthesis of riboflavin. This Halorhodospira halophila (strain DSM 244 / SL1) (Ectothiorhodospira halophila (strain DSM 244 / SL1)) protein is 6,7-dimethyl-8-ribityllumazine synthase.